Here is a 500-residue protein sequence, read N- to C-terminus: Glucose-1-phosphate adenylyltransferase small subunit 1, chloroplastic/amyloplastic (500 aa).

The transit peptide at 1–50 (MAMMAMGAASWAPIPAPARAAAAFYPGRDLAAARRRRGAAARRPFVFTPR) directs the protein to the chloroplast.

Belongs to the bacterial/plant glucose-1-phosphate adenylyltransferase family. In terms of assembly, heterotetramer composed of two small and two large subunits. As to expression, expressed in leaves.

It localises to the plastid. The protein resides in the chloroplast. It is found in the amyloplast. It carries out the reaction alpha-D-glucose 1-phosphate + ATP + H(+) = ADP-alpha-D-glucose + diphosphate. The protein operates within glycan biosynthesis; starch biosynthesis. With respect to regulation, activated by 3'phosphoglycerate, inhibited by orthophosphate. Allosteric regulation. Its function is as follows. Involved in synthesis of starch. Catalyzes the synthesis of ADP-glucose, a molecule that serves as an activated glycosyl donor for alpha-1,4-glucan synthesis. Essential for starch synthesis in leaf chloroplasts and endosperm amyloplasts. This is Glucose-1-phosphate adenylyltransferase small subunit 1, chloroplastic/amyloplastic from Oryza sativa subsp. japonica (Rice).